We begin with the raw amino-acid sequence, 67 residues long: UPF0337 protein Atu4724 (67 aa).

Belongs to the UPF0337 (CsbD) family.

The protein is UPF0337 protein Atu4724 of Agrobacterium fabrum (strain C58 / ATCC 33970) (Agrobacterium tumefaciens (strain C58)).